The sequence spans 382 residues: Dual-specificity RNA methyltransferase RlmN (382 aa).

Glu-96 serves as the catalytic Proton acceptor. Residues 102–342 form the Radical SAM core domain; the sequence is QGKRGTLCVS…VRTTRGEDID (241 aa). Cys-109 and Cys-345 are joined by a disulfide. Cys-116, Cys-120, and Cys-123 together coordinate [4Fe-4S] cluster. S-adenosyl-L-methionine contacts are provided by residues 170 to 171, Ser-202, 224 to 226, and Asn-302; these read GE and SLH. The active-site S-methylcysteine intermediate is Cys-345.

Belongs to the radical SAM superfamily. RlmN family. [4Fe-4S] cluster serves as cofactor.

Its subcellular location is the cytoplasm. It carries out the reaction adenosine(2503) in 23S rRNA + 2 reduced [2Fe-2S]-[ferredoxin] + 2 S-adenosyl-L-methionine = 2-methyladenosine(2503) in 23S rRNA + 5'-deoxyadenosine + L-methionine + 2 oxidized [2Fe-2S]-[ferredoxin] + S-adenosyl-L-homocysteine. The catalysed reaction is adenosine(37) in tRNA + 2 reduced [2Fe-2S]-[ferredoxin] + 2 S-adenosyl-L-methionine = 2-methyladenosine(37) in tRNA + 5'-deoxyadenosine + L-methionine + 2 oxidized [2Fe-2S]-[ferredoxin] + S-adenosyl-L-homocysteine. Specifically methylates position 2 of adenine 2503 in 23S rRNA and position 2 of adenine 37 in tRNAs. m2A2503 modification seems to play a crucial role in the proofreading step occurring at the peptidyl transferase center and thus would serve to optimize ribosomal fidelity. The sequence is that of Dual-specificity RNA methyltransferase RlmN from Pseudomonas fluorescens (strain SBW25).